We begin with the raw amino-acid sequence, 686 residues long: MAM domain-containing protein 2 (686 aa).

The signal sequence occupies residues 1-18 (MLLRGVLLALQALQLAGA). 4 consecutive MAM domains span residues 24 to 169 (GSCA…YCIE), 168 to 329 (IECD…HCQN), 340 to 498 (ASCN…SCSS), and 507 to 666 (GECT…PCGE). Asn134 and Asn329 each carry an N-linked (GlcNAc...) asparagine glycan. Disordered stretches follow at residues 521–543 (EKRN…TGPK) and 665–686 (GEME…EIEY). Asn524 is a glycosylation site (N-linked (GlcNAc...) asparagine).

Post-translationally, O-glycosylated.

It is found in the secreted. It localises to the extracellular space. The protein localises to the extracellular matrix. This is MAM domain-containing protein 2 (MAMDC2) from Homo sapiens (Human).